Here is a 1187-residue protein sequence, read N- to C-terminus: Nicotinate dehydrogenase subunit B (1187 aa).

A helical transmembrane segment spans residues 764–784 (WWFGSLAGVFGAALGMLATAL). Cytochrome c domains follow at residues 804–907 (AMLE…MSQT), 949–1057 (AQWN…SSLE), and 1075–1163 (VSLS…RHRF). Heme c contacts are provided by C818, C821, H822, C964, C967, H968, C1088, C1091, and H1092.

Mo-molybdopterin cytosine dinucleotide serves as cofactor.

The protein localises to the membrane. The enzyme catalyses 2 Fe(III)-[cytochrome] + nicotinate + H2O = 2 Fe(II)-[cytochrome] + 6-hydroxynicotinate + 2 H(+). Its pathway is cofactor degradation; nicotinate degradation. Subunit of the two-component enzyme NicAB that mediates nicotinate hydroxylation, the first step in the aerobic nicotinate degradation pathway. Mediates conversion of nicotinate into 6-hydroxynicotinate (6HNA). This chain is Nicotinate dehydrogenase subunit B (nicB), found in Pseudomonas putida (strain ATCC 47054 / DSM 6125 / CFBP 8728 / NCIMB 11950 / KT2440).